The following is a 264-amino-acid chain: Fructose-1,6-bisphosphatase/inositol-1-monophosphatase (264 aa).

4 residues coordinate Mg(2+): E70, D86, L88, and D89. Substrate contacts are provided by residues 89 to 91, R185, and A190; that span reads DGT. D214 contributes to the Mg(2+) binding site.

It belongs to the inositol monophosphatase superfamily. FBPase class 4 family. It depends on Mg(2+) as a cofactor.

The catalysed reaction is beta-D-fructose 1,6-bisphosphate + H2O = beta-D-fructose 6-phosphate + phosphate. The enzyme catalyses a myo-inositol phosphate + H2O = myo-inositol + phosphate. Phosphatase with broad specificity; it can dephosphorylate fructose 1,6-bisphosphate, and both D and L isomers of inositol-1-phosphate (I-1-P). This is Fructose-1,6-bisphosphatase/inositol-1-monophosphatase (suhB) from Aquifex aeolicus (strain VF5).